We begin with the raw amino-acid sequence, 400 residues long: MTQFASPVLHSLLDTDAYKLHMQQAVFHHYYDVQVAAEFRCRGDDLLGIYADAIREQVDAMQHLRLQEDEFQWLSGLPFFKPDYLNWLREFRYNPAQVCVTNDNGKLNIRLTGSWREVIMWEVPLLAVISELVHHYRSPNAGVDQALDALESKLVDFTALTANLDMSRFHLMDFGTRRRFSREVQQAIVKRLQQESWFVGTSNYDLARRLALTPMGTQAHEWFQAHQQINPDLATSQRAALAAWLNEYPDQLGIALTDCITMDAFLRDFGIEFASRYQGLRHDSGDPVAWGEKAIAHYEKLGIDPLTKTLVFSDNLDLPKAVELYRHFASRVQLSFGIGTRLTCDIPQVKPLNIVIKLVECNGKPVAKLSDSPGKTICHDKAFVRALRKAFDLPQVRKAS.

His-220 is modified (phosphohistidine; by autocatalysis).

It belongs to the NAPRTase family. Post-translationally, transiently phosphorylated on a His residue during the reaction cycle. Phosphorylation strongly increases the affinity for substrates and increases the rate of nicotinate D-ribonucleotide production. Dephosphorylation regenerates the low-affinity form of the enzyme, leading to product release.

It carries out the reaction nicotinate + 5-phospho-alpha-D-ribose 1-diphosphate + ATP + H2O = nicotinate beta-D-ribonucleotide + ADP + phosphate + diphosphate. It participates in cofactor biosynthesis; NAD(+) biosynthesis; nicotinate D-ribonucleotide from nicotinate: step 1/1. In terms of biological role, catalyzes the synthesis of beta-nicotinate D-ribonucleotide from nicotinate and 5-phospho-D-ribose 1-phosphate at the expense of ATP. The protein is Nicotinate phosphoribosyltransferase of Salmonella typhi.